Reading from the N-terminus, the 280-residue chain is 3,2-trans-enoyl-CoA isomerase (280 aa).

Substrate-binding positions include 68-72 (SGADF) and Leu-126. Glu-158 (proton donor/acceptor) is an active-site residue. The short motif at 278 to 280 (HRL) is the Microbody targeting signal element.

It belongs to the enoyl-CoA hydratase/isomerase family. As to quaternary structure, homohexamer, dimer of trimers. Interacts with DCI1.

The protein localises to the peroxisome. It carries out the reaction a (3Z)-enoyl-CoA = a 4-saturated (2E)-enoyl-CoA. The enzyme catalyses a (3E)-enoyl-CoA = a 4-saturated (2E)-enoyl-CoA. Its pathway is lipid metabolism; fatty acid beta-oxidation. Essential for the beta oxidation of unsaturated fatty acids. This is 3,2-trans-enoyl-CoA isomerase (ECI1) from Saccharomyces cerevisiae (strain ATCC 204508 / S288c) (Baker's yeast).